The primary structure comprises 391 residues: Mycofactocin maturase MftC (391 aa).

One can recognise a Radical SAM core domain in the interval 16 to 232 (LDAPICLTWE…KGERVLTGDS (217 aa)). The [4Fe-4S] cluster site is built by Cys-30, Cys-34, Cys-37, Cys-251, Cys-258, Cys-269, Cys-310, Cys-313, Cys-319, Cys-323, and Cys-341. The segment at 340–391 (ECVQGHSEPALARERHLPRPRADHSRGRRVSKPVPLTLSMRPPKRPCNESPV) is disordered. Basic and acidic residues predominate over residues 350–364 (LARERHLPRPRADHS).

The protein belongs to the radical SAM superfamily. Requires [4Fe-4S] cluster as cofactor.

It catalyses the reaction [mycofactocin precursor peptide]-C-terminal glycyl-L-valyl-L-tyrosine + S-adenosyl-L-methionine = [mycofactocin precursor peptide]-C-terminal glycyl-N-{[2-(4-hydroxyphenyl)ethenyl]-3-methylbutanamide} + 5'-deoxyadenosine + L-methionine + CO2. The enzyme catalyses [mycofactocin precursor peptide]-C-terminal glycyl-N-{[2-(4-hydroxyphenyl)ethenyl]-3-methylbutanamide} + AH2 + S-adenosyl-L-methionine = [mycofactocin precursor peptide]-C-terminal glycyl-N-{5-[(4-hydroxyphenyl)methyl]-4,4-dimethyl-2-oxopyrrolidin-3-yl}acetamide + 5'-deoxyadenosine + L-methionine + A + H(+). Functionally, radical S-adenosylmethionine (SAM) enzyme responsible for the first step of the biosynthesis of the enzyme cofactor mycofactocin (MFT). Catalyzes two reactions at the C-terminus of the mycofactocin precursor (the MftA peptide). The first one is the oxidative decarboxylation of the C-terminal L-tyrosine of MftA, forming an unsaturated tyramine moiety. The second reaction is the cross-linking of the tyramine with the penultimate L-valine residue, forming a five-membered lactam ring. Its activity requires the presence of the MftB chaperone. This is Mycofactocin maturase MftC (mftC) from Mycobacterium tuberculosis (strain CDC 1551 / Oshkosh).